The following is a 209-amino-acid chain: Aspartate kinase-like protein lolA1 (209 aa).

The segment covering 1-11 has biased composition (basic and acidic residues); sequence MLDESPMRKGD. The tract at residues 1 to 27 is disordered; sequence MLDESPMRKGDSVSNDQSNPESNASVS. Residues 12–27 are compositionally biased toward polar residues; that stretch reads SVSNDQSNPESNASVS.

This sequence belongs to the aspartokinase family.

The protein operates within alkaloid biosynthesis. Aspartokinase-like protein; part of the gene cluster that mediates the biosynthesis of loline alkaloids, potent insecticidal agents composed of a pyrrolizidine ring system and an uncommon ether bridge linking carbons 2 and 7. Lolines are structurally differentiated by the various modifications of the L-amino group and include norloline, loline, N-methylloline, N-acetylloline, N-acetylnorloline, and N-formylloline. The first committed step is the condensation of O-acetyl-L-homoserine (derived from L-aspartic acid) and L-proline, probably catalyzed by the gamma-type pyridoxal 5'-phosphate(PLP)-dependent enzyme lolC, to give the diamino diacid, NACPP. Ensuing cyclization, decarboxylation, and acetylation steps yield 1-exo-acetamidopyrrolizidine (AcAP). LolO is required for installation of the ether bridge upon the pathway intermediate, 1-exo-acetamidopyrrolizidine (AcAP). In sequential 2-oxoglutarate- and O(2)-consuming steps, lolO removes hydrogens from C2 and C7 of AcAP to form both carbon-oxygen bonds in N-acetylnorloline (NANL), the precursor to all other lolines. The enzymes lolD, lolE, lolF and lolT have also been proposed to be involved in the ether-bridge installation. Further processing of the exocyclic moiety of NANL by fungal N-acetamidase (LolN), methyltransferase (LolM), and cytochrome P450 (LolP) enzymes, with occasional involvement of a plant acetyltransferase, generates the other known lolines. LolN transforms NANL to norlonine which is monomethylated and dimethylated to respectively lonine and N-methyllonine (NML) by lolM. LolP catalyzes hydroxylation of the methyl group in N-methylloline (NML) and further oxygenation to N-formylloline (NFL). A plant acetyltransferase is responsible for the acetylation of loline to form N-acetylloline (NAL). LolA might interact with aspartate kinase to prevent feedback inhibition of its activity by these end products and thereby promote production of L-homoserine from L-aspartate. This chain is Aspartate kinase-like protein lolA1, found in Epichloe uncinata (Endophyte fungus).